The primary structure comprises 746 residues: tRNA(Met) cytidine acetyltransferase TmcA (746 aa).

The tract at residues 181–200 (ARAETGGNPPSPGDSACRTE) is disordered. Residues glutamine 202, 228–237 (GRGKSAALGI), and arginine 370 contribute to the ATP site. An N-acetyltransferase domain is found at 405–617 (VAVERLDRDA…VHLPHQLADP (213 aa)). Acetyl-CoA contacts are provided by residues 517–519 (IAV), 524–530 (QGQGLGT), glutamate 557, and arginine 564.

It belongs to the RNA cytidine acetyltransferase family. TmcA subfamily.

The protein resides in the cytoplasm. It catalyses the reaction cytidine(34) in elongator tRNA(Met) + acetyl-CoA + ATP + H2O = N(4)-acetylcytidine(34) in elongator tRNA(Met) + ADP + phosphate + CoA + H(+). In terms of biological role, catalyzes the formation of N(4)-acetylcytidine (ac(4)C) at the wobble position of tRNA(Met), by using acetyl-CoA as an acetyl donor and ATP (or GTP). The sequence is that of tRNA(Met) cytidine acetyltransferase TmcA from Nitrosococcus halophilus (strain Nc4).